Reading from the N-terminus, the 159-residue chain is MVLLISSEVSARDLTETTSDAKKEVVEKTNEVNDAKYGGGYNHGGGGYNGGGYNHGGGGYNNGGGYNHGGGGYNNGGGGYNHGGGGYNNGGGGYNHGGGGYNNGGGGYNHGGGGYNGGGYNHGGGGYNHGGGGCQYHCHGRCCSHAEFVAMQAKDNTQN.

6 tandem repeats follow at residues 38 to 49 (GGGYNHGGGGYN), 50 to 61 (GGGYNHGGGGYN), 63 to 74 (GGGYNHGGGGYN), 77 to 88 (GGGYNHGGGGYN), 91 to 102 (GGGYNHGGGGYN), and 105 to 116 (GGGYNHGGGGYN). Residues 38–135 (GGGYNHGGGG…GYNHGGGGCQ (98 aa)) are 7 X 12 AA repeats of G-G-G-Y-N-H-G-G-G-Y-N. The 7; approximate repeat unit spans residues 124–135 (GGGYNHGGGGCQ).

The protein belongs to the GRP family.

The chain is Abscisic acid and environmental stress-inducible protein from Medicago sativa subsp. falcata (Sickle medic).